Here is a 359-residue protein sequence, read N- to C-terminus: Aminomethyltransferase (359 aa).

Belongs to the GcvT family. As to quaternary structure, the glycine cleavage system is composed of four proteins: P, T, L and H.

The enzyme catalyses N(6)-[(R)-S(8)-aminomethyldihydrolipoyl]-L-lysyl-[protein] + (6S)-5,6,7,8-tetrahydrofolate = N(6)-[(R)-dihydrolipoyl]-L-lysyl-[protein] + (6R)-5,10-methylene-5,6,7,8-tetrahydrofolate + NH4(+). Functionally, the glycine cleavage system catalyzes the degradation of glycine. This Alcanivorax borkumensis (strain ATCC 700651 / DSM 11573 / NCIMB 13689 / SK2) protein is Aminomethyltransferase.